The following is a 319-amino-acid chain: Acetyl-coenzyme A carboxylase carboxyl transferase subunit alpha (319 aa).

One can recognise a CoA carboxyltransferase C-terminal domain in the interval 39 to 293; sequence RLQKKSNDLT…KAVLEKQLHE (255 aa).

The protein belongs to the AccA family. Acetyl-CoA carboxylase is a heterohexamer composed of biotin carboxyl carrier protein (AccB), biotin carboxylase (AccC) and two subunits each of ACCase subunit alpha (AccA) and ACCase subunit beta (AccD).

The protein resides in the cytoplasm. The enzyme catalyses N(6)-carboxybiotinyl-L-lysyl-[protein] + acetyl-CoA = N(6)-biotinyl-L-lysyl-[protein] + malonyl-CoA. It functions in the pathway lipid metabolism; malonyl-CoA biosynthesis; malonyl-CoA from acetyl-CoA: step 1/1. Functionally, component of the acetyl coenzyme A carboxylase (ACC) complex. First, biotin carboxylase catalyzes the carboxylation of biotin on its carrier protein (BCCP) and then the CO(2) group is transferred by the carboxyltransferase to acetyl-CoA to form malonyl-CoA. This is Acetyl-coenzyme A carboxylase carboxyl transferase subunit alpha from Neisseria meningitidis serogroup C (strain 053442).